Here is a 252-residue protein sequence, read N- to C-terminus: MTKLEVCCYSVDCAITAAQSGADRIELCAGQREGGLTPSYGALRGAREKIAIPVHPIVRPRGGDFCYNATEFAAIKYDIEQVREMGFPGVVVGALNEEGHIDLPKMREIMAVAQGMAVTFHRAFDMCLNPYIALEQLTDLGVSRILSSGQQQTAENGLRLLRELTQASRGPIIMAGSGVRLTNVHKFQQAGIRELHSSAGQWTSSPMRYRKIGVSMCSDTELDEFSQYCVDGDVVEAMKRAVSPDREMQYVS.

Belongs to the CutC family.

The protein localises to the cytoplasm. The chain is PF03932 family protein CutC from Pectobacterium atrosepticum (strain SCRI 1043 / ATCC BAA-672) (Erwinia carotovora subsp. atroseptica).